A 288-amino-acid chain; its full sequence is MACSHLAAAAAAASPAAARSPAASSAATASAFARLSATPRVASGGLAVRGQRGVAAVVAAAAGAAAATPVADIEERRATEKQPIIVIDNYDSFTYNLCQYMGELGLNFEVYRNDELTIEDVKRKNPRGILISPGPGEPQDSGISLQTVLELGPTIPIFGVCMGLQCIGEAFGGKIIRAPSGVMHGKSSPVRYDEELGKALFNGLPNPFTAARYHSLVIEQETFPHDALEATAWTEDGLIMAARHKKYRHIQGVQFHPESIITPEGKRIILNFVRFIEELEKQRAGEKN.

The transit peptide at M1–V58 directs the protein to the chloroplast. Positions P83–Q282 constitute a Glutamine amidotransferase type-1 domain. Residue G134–G136 participates in L-glutamine binding. Residue C161 is the Nucleophile of the active site. Residues Q165 and S215–L216 contribute to the L-glutamine site. Catalysis depends on residues H256 and E258.

In terms of assembly, heterotetramer consisting of two non-identical subunits: a beta subunit and a large alpha subunit. Expressed in roots and leaves.

It localises to the plastid. It is found in the chloroplast. It catalyses the reaction chorismate + L-glutamine = anthranilate + pyruvate + L-glutamate + H(+). Its pathway is amino-acid biosynthesis; L-tryptophan biosynthesis; L-tryptophan from chorismate: step 1/5. Functionally, part of a heterotetrameric complex that catalyzes the two-step biosynthesis of anthranilate, an intermediate in the biosynthesis of L-tryptophan. In the first step, the glutamine-binding beta subunit of anthranilate synthase (AS) provides the glutamine amidotransferase activity which generates ammonia as a substrate that, along with chorismate, is used in the second step, catalyzed by the large alpha subunit of AS to produce anthranilate. The polypeptide is Anthranilate synthase beta subunit 1, chloroplastic (Oryza sativa subsp. japonica (Rice)).